The following is a 173-amino-acid chain: MSSKATLALLIYGIIMHYSVYSSPLGLNYPNLRLENEVYDEDGNSLPALAFDSDQIAIRSPPSVADDLYTLYYPPEKGTERHADGMFNKAYRKALGQLSARKYLHSLMAKRVGGGSTMEDDTEPLSKRHSDGIFTDSYSRYRKQMAVKKYLAAVLGKRYRQRYRNKGRRLGYL.

A signal peptide spans 1-22 (MSSKATLALLIYGIIMHYSVYS). The propeptide occupies 23-80 (SPLGLNYPNLRLENEVYDEDGNSLPALAFDSDQIAIRSPPSVADDLYTLYYPPEKGTE). The residue at position 166 (lysine 166) is a Lysine amide. The propeptide occupies 170–173 (LGYL).

It belongs to the glucagon family.

The protein localises to the secreted. Its function is as follows. Primary role of GHRH is to release GH from the pituitary. PACAP plays pivotal roles as a neurotransmitter and/or a neuromodulator. In Oncorhynchus nerka (Sockeye salmon), this protein is Glucagon family neuropeptides.